We begin with the raw amino-acid sequence, 356 residues long: uncharacterized protein (356 aa).

The next 6 membrane-spanning stretches (helical) occupy residues 2-22 (FEAF…FHRL), 35-55 (AYVT…PIPY), 74-94 (FTNM…EIVV), 99-119 (IMYG…GPFL), 124-144 (VLSL…VALV), and 154-174 (IILI…FVDI). The 136-residue stretch at 218–353 (QSIALLLIDI…GRNKVMFNPI (136 aa)) folds into the GGDEF domain.

It is found in the cell membrane. This is an uncharacterized protein from Staphylococcus aureus (strain bovine RF122 / ET3-1).